We begin with the raw amino-acid sequence, 466 residues long: Asparagine--tRNA ligase (466 aa).

The protein belongs to the class-II aminoacyl-tRNA synthetase family. As to quaternary structure, homodimer.

The protein localises to the cytoplasm. It carries out the reaction tRNA(Asn) + L-asparagine + ATP = L-asparaginyl-tRNA(Asn) + AMP + diphosphate + H(+). In Shewanella putrefaciens (strain CN-32 / ATCC BAA-453), this protein is Asparagine--tRNA ligase.